The following is a 103-amino-acid chain: uncharacterized protein (103 aa).

The interval 1–103 (MAGARRRARC…WRGGSCTSQR (103 aa)) is disordered. Residues 35–44 (GSGQPRWWPW) show a composition bias toward low complexity. 2 stretches are compositionally biased toward basic residues: residues 55–65 (RRPGPGRRARS) and 74–84 (RPPHSRTRARR).

Belongs to the epstein-barr virus RPMS1 family.

This is an uncharacterized protein from Homo sapiens (Human).